Reading from the N-terminus, the 459-residue chain is 5-hydroxytryptamine receptor 2C (459 aa).

The N-terminal stretch at 1-32 is a signal peptide; it reads MVNLGTAVRSLLVHLIGLLVWQFDISISPVAA. Residues 33–56 are Extracellular-facing; it reads IVTDTFNSSDGGRLFQFPDGVQNW. Residues 57–81 traverse the membrane as a helical segment; that stretch reads PALSIVVIIIMTIGGNILVIMAVSM. The Cytoplasmic portion of the chain corresponds to 82–87; that stretch reads EKKLHN. A helical transmembrane segment spans residues 88 to 112; it reads ATNYFLMSLAIADMLVGLLVMPLSL. The Extracellular portion of the chain corresponds to 113–129; the sequence is LAILYDYVWPLPRYLCP. An intrachain disulfide couples C128 to C208. The helical transmembrane segment at 130–152 threads the bilayer; the sequence is VWISLDVLFSTASIMHLCAISLD. T140 provides a ligand contact to ergotamine. A DRY motif; important for ligand-induced conformation changes motif is present at residues 152–154; that stretch reads DRY. Residues 153–168 are Cytoplasmic-facing; sequence RYVAIRNPIEHSRFNS. Residues 169 to 190 traverse the membrane as a helical segment; sequence RTKAIMKIAIVWAISIGVSVPI. Over 191–214 the chain is Extracellular; it reads PVIGLRDESKVFVNNTTCVLNDPN. N204 and N205 each carry an N-linked (GlcNAc...) asparagine glycan. Residue L210 coordinates ergotamine. Residues 215–237 traverse the membrane as a helical segment; that stretch reads FVLIGSFVAFFIPLTIMVITYFL. The Cytoplasmic portion of the chain corresponds to 238–312; sequence TIYVLRRQTL…AINNEKKASK (75 aa). Residues 274–302 form a disordered region; the sequence is DEEENAPNPNPDQKPRRKKKEKRPRGTMQ. Residues 288-298 are compositionally biased toward basic residues; it reads PRRKKKEKRPR. Residues 313 to 337 traverse the membrane as a helical segment; the sequence is VLGIVFFVFLIMWCPFFITNILSVL. C338 and C342 are oxidised to a cystine. The Extracellular segment spans residues 338 to 348; it reads CGKACNQKLME. The chain crosses the membrane as a helical span at residues 349-371; it reads KLLNVFVWIGYVCSGINPLVYTL. The short motif at 365-369 is the NPxxY motif; important for ligand-induced conformation changes and signaling element; the sequence is NPLVY. The Cytoplasmic portion of the chain corresponds to 372–459; the sequence is FNKIYRRAFS…NVVSERISSV (88 aa). Positions 457–459 match the PDZ-binding motif; that stretch reads SSV.

It belongs to the G-protein coupled receptor 1 family. As to quaternary structure, interacts with MPDZ. Interacts with ARRB2. Interacts with MPP3; this interaction stabilizes the receptor at the plasma membrane and prevents the desensitization of the HTR2C receptor-mediated calcium response. Detected in brain cortex, hypothalamus, brainstem and arcuate nucleus. Detected in the paraventricular nucleus of the hypothalamus.

Its subcellular location is the cell membrane. G-protein coupled receptor for 5-hydroxytryptamine (serotonin). Also functions as a receptor for various drugs and psychoactive substances, including ergot alkaloid derivatives, 1-2,5,-dimethoxy-4-iodophenyl-2-aminopropane (DOI) and lysergic acid diethylamide (LSD). Ligand binding causes a conformation change that triggers signaling via guanine nucleotide-binding proteins (G proteins) and modulates the activity of downstream effectors. HTR2C is coupled to G(q)/G(11) G alpha proteins and activates phospholipase C-beta, releasing diacylglycerol (DAG) and inositol 1,4,5-trisphosphate (IP3) second messengers that modulate the activity of phosphatidylinositol 3-kinase and promote the release of Ca(2+) ions from intracellular stores, respectively. Beta-arrestin family members inhibit signaling via G proteins and mediate activation of alternative signaling pathways. Regulates neuronal activity via the activation of short transient receptor potential calcium channels in the brain, and thereby modulates the activation of pro-opiomelanocortin neurons and the release of CRH that then regulates the release of corticosterone. Plays a role in the regulation of appetite and eating behavior, responses to anxiogenic stimuli and stress. Plays a role in insulin sensitivity and glucose homeostasis. The protein is 5-hydroxytryptamine receptor 2C of Mus musculus (Mouse).